Reading from the N-terminus, the 236-residue chain is UPF0257 lipoprotein YnfC (236 aa).

Residues Met1–Gly16 form the signal peptide. A lipid anchor (N-palmitoyl cysteine) is attached at Cys17. Cys17 carries the S-diacylglycerol cysteine lipid modification.

Belongs to the UPF0257 family.

The protein localises to the cell membrane. The protein is UPF0257 lipoprotein YnfC of Salmonella typhi.